The sequence spans 1031 residues: Pre-mRNA-splicing factor SYF1 (1031 aa).

HAT repeat units follow at residues 28-60 (HLIPSADLPVEEDLLHNPENLRSWLSYIHNVKE), 90-122 (DGLQRLVSIYERAIAVFPTSYKLWKAYYLTRQS), 214-248 (KNGSYARRAFDRALRTLPPSLHGRVWGLYLRWAEI), and 250-269 (GGDAGERVWRRYLKVDPSLT). The segment at 346 to 368 (VEEKVDGEQPQVEGQEQQPQEEP) is disordered. The span at 353 to 368 (EQPQVEGQEQQPQEEP) shows a compositional bias: low complexity. HAT repeat units lie at residues 452 to 487 (GEFERATATFERGLAAVVTIRDFTQIFDAYAEFSET), 610 to 646 (PDLEQARKIFERATKVPFKAVDELAEVWCEWAEMELR), 664 to 698 (PKNTKINYYDDNIPPQSRLFKSLKLWSYYSDLEES), 700 to 732 (GTVESTKAVYDKIMELKIANAQVIVNYATFLEE), 734 to 768 (KYFEESFKVYERGIELFHFPIAFEIWNIYLSKFVK), 773 to 807 (KKLERARDLFEQALENCPEKFCKPLYLMYAKLEEE), 845 to 879 (FGLPATRPIYERALESLPDKQTAEMCRRFARMERK), and 881 to 915 (GEIDRARAIYAHASQFCDPRIEPEFWQEWNDFEIE). Disordered stretches follow at residues 948 to 969 (AAASKGTEKPTDTSAQEAQDAA) and 1003 to 1031 (TNANGIDEGGEETGEMANPDAIVMDEDEF).

This sequence belongs to the crooked-neck family. As to quaternary structure, associated with the spliceosome.

The protein localises to the nucleus. Functionally, involved in pre-mRNA splicing and cell cycle progression. This chain is Pre-mRNA-splicing factor SYF1 (SYF1), found in Cryptococcus neoformans var. neoformans serotype D (strain B-3501A) (Filobasidiella neoformans).